Here is a 1035-residue protein sequence, read N- to C-terminus: Sialidase A (1035 aa).

Positions M1–A53 are cleaved as a signal peptide. The interval A57–A112 is disordered. Polar residues predominate over residues P61 to N92. Positions Q94 to A112 are enriched in basic and acidic residues. R347 serves as a coordination point for substrate. D372 serves as the catalytic Proton acceptor. 3 BNR repeats span residues R381–D392, S539–A550, and I607–A618. E647 is an active-site residue. Residue R663 participates in substrate binding. The stretch at A672–K683 is one BNR 4 repeat. The disordered stretch occupies residues G902–A951. The LPXTG sorting signal signature appears at L1003–G1007. A Pentaglycyl murein peptidoglycan amidated threonine modification is found at T1006. Residues G1007 to Q1035 constitute a propeptide, removed by sortase.

The protein belongs to the glycosyl hydrolase 33 family.

Its subcellular location is the secreted. The protein resides in the cell wall. The catalysed reaction is Hydrolysis of alpha-(2-&gt;3)-, alpha-(2-&gt;6)-, alpha-(2-&gt;8)- glycosidic linkages of terminal sialic acid residues in oligosaccharides, glycoproteins, glycolipids, colominic acid and synthetic substrates.. In Streptococcus pneumoniae, this protein is Sialidase A (nanA).